Reading from the N-terminus, the 245-residue chain is Type III pantothenate kinase (245 aa).

ATP is bound at residue 6-13; that stretch reads DVGNTAMK. Substrate-binding positions include Y93 and 100–103; that span reads GVDR. The active-site Proton acceptor is D102. A K(+)-binding site is contributed by D121. An ATP-binding site is contributed by S124. Substrate is bound at residue T175.

It belongs to the type III pantothenate kinase family. Homodimer. Requires NH4(+) as cofactor. K(+) is required as a cofactor.

Its subcellular location is the cytoplasm. The enzyme catalyses (R)-pantothenate + ATP = (R)-4'-phosphopantothenate + ADP + H(+). It functions in the pathway cofactor biosynthesis; coenzyme A biosynthesis; CoA from (R)-pantothenate: step 1/5. In terms of biological role, catalyzes the phosphorylation of pantothenate (Pan), the first step in CoA biosynthesis. In Alcanivorax borkumensis (strain ATCC 700651 / DSM 11573 / NCIMB 13689 / SK2), this protein is Type III pantothenate kinase.